We begin with the raw amino-acid sequence, 482 residues long: Ubiquitin carboxyl-terminal hydrolase 6 (482 aa).

The region spanning P2–I77 is the Ubiquitin-like domain. The region spanning A104–R478 is the USP domain. C113 serves as the catalytic Nucleophile. The tract at residues S172 to G191 is calmodulin-binding. Basic and acidic residues-rich tracts occupy residues P350 to K361 and G371 to D381. Residues P350–T407 form a disordered region. A compositionally biased stretch (low complexity) spans A382–S393. The Proton acceptor role is filled by H430.

The protein belongs to the peptidase C19 family. Interacts with calmodulin (CaM).

It carries out the reaction Thiol-dependent hydrolysis of ester, thioester, amide, peptide and isopeptide bonds formed by the C-terminal Gly of ubiquitin (a 76-residue protein attached to proteins as an intracellular targeting signal).. In terms of biological role, recognizes and hydrolyzes the peptide bond at the C-terminal Gly of ubiquitin. Involved in the processing of poly-ubiquitin precursors as well as that of ubiquitinated proteins. This is Ubiquitin carboxyl-terminal hydrolase 6 (UBP6) from Arabidopsis thaliana (Mouse-ear cress).